The following is a 416-amino-acid chain: Peroxisomal isocitrate dehydrogenase [NADP] (416 aa).

Residues 77–79 and Arg84 contribute to the NADP(+) site; that span reads TIT. Position 79 (Thr79) interacts with substrate. Substrate is bound by residues 96–102, Arg111, and Arg134; that span reads SPNGTIR. Asp253 provides a ligand contact to Mn(2+). Lys261 is an NADP(+) binding site. Asp276 lines the Mn(2+) pocket. NADP(+) contacts are provided by residues 311-316 and Asn329; that span reads GTVTRH. The short motif at 414–416 is the Peroxisomal targeting signal element; it reads SRL.

This sequence belongs to the isocitrate and isopropylmalate dehydrogenases family. Mg(2+) serves as cofactor. It depends on Mn(2+) as a cofactor.

The protein resides in the peroxisome. The enzyme catalyses D-threo-isocitrate + NADP(+) = 2-oxoglutarate + CO2 + NADPH. In terms of biological role, may be involved in response to oxidative stresses. This is Peroxisomal isocitrate dehydrogenase [NADP] (ICDH) from Arabidopsis thaliana (Mouse-ear cress).